The sequence spans 657 residues: Splicing factor Cactin (657 aa).

Residues 1 to 15 show a composition bias toward basic residues; sequence MGKDSKKHKKERRRE. Disordered stretches follow at residues 1–83, 369–406, and 472–503; these read MGKD…EDTL, QESE…ISKK, and ADVD…QGAS. 2 coiled-coil regions span residues 23 to 77 and 352 to 403; these read SDEE…RKDA and RLQL…DEKI. Basic and acidic residues predominate over residues 26-60; that stretch reads ERLQKRLAEQRSLKKDEKRRQKEEMKKNESAEEKR. Residues 61–72 are compositionally biased toward basic residues; it reads ARRMEKKMRKDA. The segment covering 389–401 has biased composition (acidic residues); that stretch reads EEEEEEEEDEDDE. Over residues 489–503 the composition is skewed to low complexity; that stretch reads PSSSAASSGAPQGAS.

It belongs to the CACTIN family. In terms of tissue distribution, expressed in pharynx, intestine, vulva and spermatheca (at protein level).

The protein resides in the nucleus. It is found in the cytoplasm. Functionally, plays a role in pre-mRNA splicing by facilitating excision of a subset of introns. Plays a role during early embryonic development. Required for the distal tip cell migration at the end of larval development and for gonad morphogenesis. The chain is Splicing factor Cactin (cacn-1) from Caenorhabditis elegans.